Here is a 127-residue protein sequence, read N- to C-terminus: Protein ApaG (127 aa).

In terms of domain architecture, ApaG spans 3–127 (KDKRYAFSVK…FQLNMPRVLH (125 aa)).

The sequence is that of Protein ApaG from Methylobacillus flagellatus (strain ATCC 51484 / DSM 6875 / VKM B-1610 / KT).